Here is a 136-residue protein sequence, read N- to C-terminus: Protein NrdI (136 aa).

It belongs to the NrdI family.

Functionally, probably involved in ribonucleotide reductase function. In Salmonella dublin (strain CT_02021853), this protein is Protein NrdI.